The primary structure comprises 328 residues: Peroxidase 25 (328 aa).

Residues 1–26 form the signal peptide; it reads MGVYLGKYCYIMIIMLVLVLGKEVRS. 4 cysteine pairs are disulfide-bonded: Cys38–Cys114, Cys71–Cys76, Cys120–Cys324, and Cys198–Cys230. The Proton acceptor role is filled by His69. 5 residues coordinate Ca(2+): Asp70, Val73, Gly75, Asp77, and Ser79. Residue Pro161 participates in substrate binding. A heme b-binding site is contributed by His191. Residue Thr192 coordinates Ca(2+). An N-linked (GlcNAc...) asparagine glycan is attached at Asn207. Asp243, Ser246, and Asp251 together coordinate Ca(2+).

Belongs to the peroxidase family. Classical plant (class III) peroxidase subfamily. The cofactor is heme b. It depends on Ca(2+) as a cofactor.

It is found in the secreted. The catalysed reaction is 2 a phenolic donor + H2O2 = 2 a phenolic radical donor + 2 H2O. In terms of biological role, removal of H(2)O(2), oxidation of toxic reductants, biosynthesis and degradation of lignin, suberization, auxin catabolism, response to environmental stresses such as wounding, pathogen attack and oxidative stress. These functions might be dependent on each isozyme/isoform in each plant tissue. The sequence is that of Peroxidase 25 (PER25) from Arabidopsis thaliana (Mouse-ear cress).